Reading from the N-terminus, the 334-residue chain is Glyceraldehyde-3-phosphate dehydrogenase (334 aa).

NAD(+)-binding positions include 12–13 (TI) and Gly-111. 140–142 (SCN) provides a ligand contact to D-glyceraldehyde 3-phosphate. Residue Cys-141 is the Nucleophile of the active site. NAD(+) is bound at residue Arg-167. Residue 192–193 (HG) participates in D-glyceraldehyde 3-phosphate binding. Gln-298 is an NAD(+) binding site.

Belongs to the glyceraldehyde-3-phosphate dehydrogenase family. As to quaternary structure, homotetramer.

Its subcellular location is the cytoplasm. It catalyses the reaction D-glyceraldehyde 3-phosphate + phosphate + NADP(+) = (2R)-3-phospho-glyceroyl phosphate + NADPH + H(+). It carries out the reaction D-glyceraldehyde 3-phosphate + phosphate + NAD(+) = (2R)-3-phospho-glyceroyl phosphate + NADH + H(+). It participates in carbohydrate degradation; glycolysis; pyruvate from D-glyceraldehyde 3-phosphate: step 1/5. In Pyrococcus abyssi (strain GE5 / Orsay), this protein is Glyceraldehyde-3-phosphate dehydrogenase (gap).